The chain runs to 265 residues: MTLRLKQAFLHHTNGVEALRGVDLQIEAGEQVAIIGPSGAGKSSLLNMLATAIRPSSGDIEVLGERAWHLSARQRQRLRARIGLVHQAPPLPPRQRVVTAVLAGKLGQWSLGKSLINLLHPLDVPGARAALAKLDLADKLFSQCQQLSGGQLQRVGIARVLYQAPEVLLADEPVSAMDPVLAGHTLSILSRHAREHNVTLVASLHAVELALAHFPRIVGLREGRILFDCPSAQVSRDMLDTLYANEQLQSPAPAVTPLIVQIPRC.

The region spanning 3-247 (LRLKQAFLHH…MLDTLYANEQ (245 aa)) is the ABC transporter domain. 36–43 (GPSGAGKS) lines the ATP pocket.

This sequence belongs to the ABC transporter superfamily. Phosphonates importer (TC 3.A.1.9.1) family. The complex is composed of two ATP-binding proteins (PhnC), two transmembrane proteins (PhnE) and a solute-binding protein (PhnD).

Its subcellular location is the cell inner membrane. The enzyme catalyses phosphonate(out) + ATP + H2O = phosphonate(in) + ADP + phosphate + H(+). In terms of biological role, part of the ABC transporter complex PhnCDE involved in phosphonates import. Responsible for energy coupling to the transport system. This is Phosphonates import ATP-binding protein PhnC from Pseudomonas fluorescens (strain Pf0-1).